Here is a 412-residue protein sequence, read N- to C-terminus: Yellow-related salivary protein LJM17 (412 aa).

The signal sequence occupies residues 1-18 (MRFFFVFLAIVLFQGIHG). The N-linked (GlcNAc...) asparagine glycan is linked to asparagine 29.

The protein belongs to the major royal jelly protein family. As to expression, salivary gland.

Its subcellular location is the secreted. Its function is as follows. Probably modulates blood feeding of sand flies on vertebrate species by binding and sequestering different mediators involved in the host response. Binds biogenic amines. Binds serotonin with high affinity. Binds noradrenaline but not adrenaline. Binds dopamine and octopamine. Binds histamine. Inhibits host smooth muscle contraction induced by histamine in bioassay with guinea pig ileum. Immunogenic; elicits antibody production in the host. Functions as a chemoattractant for host neutrophils; likely acts through a G-protein-coupled receptor and effect is dependent on calcium influx. The chain is Yellow-related salivary protein LJM17 from Lutzomyia longipalpis (Sand fly).